The chain runs to 239 residues: Eukaryotic translation initiation factor 6 (239 aa).

This sequence belongs to the eIF-6 family. As to quaternary structure, monomer. Associates with the 60S ribosomal subunit.

The protein resides in the cytoplasm. Its subcellular location is the nucleus. It is found in the nucleolus. Its function is as follows. Binds to the 60S ribosomal subunit and prevents its association with the 40S ribosomal subunit to form the 80S initiation complex in the cytoplasm. May also be involved in ribosome biogenesis. In Entamoeba dispar (strain ATCC PRA-260 / SAW760), this protein is Eukaryotic translation initiation factor 6.